Here is a 238-residue protein sequence, read N- to C-terminus: Cysteine-rich venom protein (238 aa).

The first 19 residues, 1–19, serve as a signal peptide directing secretion; the sequence is MIAFIVLLSLAAVLQQSSG. A propeptide spanning residues 20–27 is cleaved from the precursor; the sequence is TVDFASES. In terms of domain architecture, SCP spans 39 to 164; sequence KKHNALRRSV…PTKYLYVCQY (126 aa). Cystine bridges form between Cys75-Cys153, Cys92-Cys165, Cys148-Cys162, Cys184-Cys191, Cys187-Cys196, Cys200-Cys233, Cys209-Cys227, and Cys218-Cys231. Residues 200–233 form the ShKT domain; sequence CKREDDYSNCKSLAEKNKCMEEWMKSKCPASCFC.

This sequence belongs to the CRISP family. In terms of tissue distribution, expressed by the venom gland.

Its subcellular location is the secreted. In terms of biological role, blocks olfactory (CNGA2) and retinal (CNGA1) cyclic nucleotide-gated (CNG) ion channel currents. Does not inhibit retinal (CNGA3) currents. It forms high-affinity contacts with the pore turret region and most likely inhibits CNG channel current by blocking the external entrance to the transmembrane pore. Does not affect neither depolarization- nor caffeine-induced contraction arterial smooth muscle. This chain is Cysteine-rich venom protein, found in Demansia vestigiata (Lesser black whip snake).